Reading from the N-terminus, the 300-residue chain is ETS homologous factor (300 aa).

A PNT domain is found at 29-115 (STCNVSSGFF…SNLQHLKWNG (87 aa)). Residues 183 to 202 (ESPDMKKEQDPPAKCHTKKH) form a disordered region. The span at 185–195 (PDMKKEQDPPA) shows a compositional bias: basic and acidic residues. A DNA-binding region (ETS) is located at residues 207-289 (THLWEFIRDI…DGRRLVYKFG (83 aa)).

The protein belongs to the ETS family. As to expression, expressed exclusively in tissues with a high content of epithelial cells. Highly expressed in salivary gland, mammary gland, prostate, and lung. Weakly expressed in kidney and colon. Not detected in heart, brain, placenta, liver, skeletal muscle, spleen, thymus, testis, ovary, small intestine or peripheral blood leukocytes.

The protein localises to the nucleus. Functionally, transcriptional activator that may play a role in regulating epithelial cell differentiation and proliferation. May act as a repressor for a specific subset of ETS/AP-1-responsive genes and as a modulator of the nuclear response to mitogen-activated protein kinase signaling cascades. Binds to DNA sequences containing the consensus nucleotide core sequence GGAA. Involved in regulation of TNFRSF10B/DR5 expression through Ets-binding sequences on the TNFRSF10B/DR5 promoter. May contribute to development and carcinogenesis by acting as a tumor suppressor gene or anti-oncogene. This chain is ETS homologous factor, found in Homo sapiens (Human).